A 471-amino-acid polypeptide reads, in one-letter code: FAD-linked oxidoreductase sorD (471 aa).

The first 23 residues, 1 to 23 (MQAASAFATCLLASVGGNSSAVA), serve as a signal peptide directing secretion. 5 N-linked (GlcNAc...) asparagine glycosylation sites follow: Asn-18, Asn-29, Asn-174, Asn-279, and Asn-351. Residues 41 to 212 (LLTTPSAIVW…TDFSIRTEPV (172 aa)) form the FAD-binding PCMH-type domain.

The protein belongs to the oxygen-dependent FAD-linked oxidoreductase family. It depends on FAD as a cofactor.

The protein operates within secondary metabolite biosynthesis. FAD-linked oxidoreductase; part of the gene cluster that mediates the biosynthesis of sorbicillinoids, a diverse group of yellow secondary metabolites that restrict growth of competing pathogenic fungi but not of bacteria. Sorbicillinoids biosynthesis requires the action of two PKSs. SorA iteratively combines three acetyl units and the growing chain is modified by the ketoacyl reductase subunit, and optional by the enoyl reductase subunit in the second cycle. The polyketide is then handed over to the PKS SorB, which adds three more acetyl units, and two methyl groups. SorB releases an aldehyde, which undergoes spontaneous cyclization resulting in the formation of sorbicillin or 2',3'-dihydrosorbicillin. The monooxygenase sorC oxidizes sorbicillin and 2',3'-dihydrosorbicillin to 2',3'-dihydrosorbicillinol and sorbicillinol, respectively. The oxidoreductase sorD further converts sorbicillinol into oxosorbicillinol. Sorbicillinol is the building block for the other sorbicillinoids such as disorbicillinol, bisvertinolon, and dihydrobisvertinolone. This chain is FAD-linked oxidoreductase sorD, found in Penicillium rubens (strain ATCC 28089 / DSM 1075 / NRRL 1951 / Wisconsin 54-1255) (Penicillium chrysogenum).